The chain runs to 421 residues: MVEIDPFEMAVQQLERAAQFMDISEEALEWLKRPMRIVEVSVPVEMDDGSVKVFTGFRVQHNWARGPTKGGIRWHPAETLSTVKALATWMTWKVAVVDLPYGGGKGGIIVDPKKLSEREQERLARSYIRAVYDVIGPWTDIPAPDVYTNPKIMAWMMDEYETIMRRKGPAFGVITGKPPGVGGIVARMDATARGAAFTIREAAKALGWDDLKGKTIAIQGYGNAGYYLHKIMSEEFGMKVVAVSDSKGGIYNPDGLPPADEVLKWKKEHGSVKDMPGTQNITNEELLELEVDILAPSAIEGVITKENADNVKAKIVAEVANGPVTPEADEILHEKGILQIPDFLCNAGGVTVSYFEWVQNINGFYWTVEETRKRLDDKMTKAFWDVFNTHKEKNIHMRDAAYVVAVSRVYEAMKHRGWVKK.

Lys105 is an active-site residue. 220 to 226 provides a ligand contact to NAD(+); that stretch reads GYGNAGY.

It belongs to the Glu/Leu/Phe/Val dehydrogenases family. As to quaternary structure, homohexamer.

The protein localises to the cytoplasm. The protein resides in the chromosome. The enzyme catalyses L-glutamate + NAD(+) + H2O = 2-oxoglutarate + NH4(+) + NADH + H(+). It carries out the reaction L-glutamate + NADP(+) + H2O = 2-oxoglutarate + NH4(+) + NADPH + H(+). This Thermococcus kodakarensis (strain ATCC BAA-918 / JCM 12380 / KOD1) (Pyrococcus kodakaraensis (strain KOD1)) protein is Glutamate dehydrogenase (gdhA).